The following is a 490-amino-acid chain: GTPase Der (490 aa).

EngA-type G domains follow at residues P3 to M166 and I200 to T373. Residues G9–S16, D56–I60, N118–D121, G206–S213, D253–V257, and N318–D321 each bind GTP. Positions R374–G458 constitute a KH-like domain.

The protein belongs to the TRAFAC class TrmE-Era-EngA-EngB-Septin-like GTPase superfamily. EngA (Der) GTPase family. In terms of assembly, associates with the 50S ribosomal subunit.

GTPase that plays an essential role in the late steps of ribosome biogenesis. The chain is GTPase Der from Shewanella halifaxensis (strain HAW-EB4).